A 776-amino-acid polypeptide reads, in one-letter code: U3 small nucleolar RNA-associated protein 4 (776 aa).

WD repeat units follow at residues 35–40 (RCRFVD), 132–169 (LPLRNYDCNSGVIWSISINDSQDKLSVGCDNGTVVLID), 178–214 (EHDTILMRQEARVLTLAWKKDDFVIGGCSDGRIRIWS), 230–266 (KVDKAKKESTLVWSVIYLPRTDQIASGDSTGSIKFWD), 271–308 (TLNQSFKAHDADVLCLTTDTDNNYVFSAGVDRKIFQFS), and 417–452 (VCKLTLKDDQNISTCSLSPDGQVLVVGRPSTTKVFH).

Interacts with snoRNA U3. Interacts with MPP10. Component of the ribosomal small subunit (SSU) processome composed of at least 40 protein subunits and snoRNA U3. In the absence of snoRNA3, forms a complex with other t-UTPs. This complex can associate with pre-18S ribosomal RNAs.

Its subcellular location is the nucleus. The protein localises to the nucleolus. In terms of biological role, involved in nucleolar processing of pre-18S ribosomal RNA. Required for optimal pre-ribosomal RNA transcription by RNA polymerase I together with a subset of U3 proteins required for transcription (t-UTPs). In Saccharomyces cerevisiae (strain ATCC 204508 / S288c) (Baker's yeast), this protein is U3 small nucleolar RNA-associated protein 4 (UTP4).